A 319-amino-acid polypeptide reads, in one-letter code: Homeobox protein Hox-B5a (319 aa).

Positions 114–224 (SLLSPGSGDT…NTVGSEGQPP (111 aa)) are disordered. Over residues 128–155 (RSSSPRSEQSGSGNLSSTNLSSSTNISS) the composition is skewed to low complexity. Positions 226-231 (IFPWMR) match the Antp-type hexapeptide motif. A DNA-binding region (homeobox) is located at residues 244-303 (GKRARTAYTRYQTLELEKEFHFNRYLTRRRRIEIAHALCLTERQIKIWFQNRRMKWKKDN).

Belongs to the Antp homeobox family.

It localises to the nucleus. Sequence-specific transcription factor which is part of a developmental regulatory system that provides cells with specific positional identities on the anterior-posterior axis. The sequence is that of Homeobox protein Hox-B5a (hoxb5a) from Takifugu rubripes (Japanese pufferfish).